The chain runs to 267 residues: 5'-methylthioadenosine nucleosidase (267 aa).

Glutamate 38 acts as the Proton acceptor in catalysis. Residues threonine 116, lysine 199–glutamate 202, and aspartate 225 each bind S-methyl-5'-thioadenosine. Adenine-binding residues include lysine 199 and aspartate 225. The active-site Proton donor is the aspartate 225.

The protein belongs to the PNP/UDP phosphorylase family. MtnN subfamily. As to quaternary structure, homodimer. Interacts with CBL3 in a calcium-dependent manner. As to expression, expressed in roots, leaves, stems, cauline leaves and flowers.

It catalyses the reaction S-methyl-5'-thioadenosine + H2O = 5-(methylsulfanyl)-D-ribose + adenine. The protein operates within amino-acid biosynthesis; L-methionine biosynthesis via salvage pathway; S-methyl-5-thio-alpha-D-ribose 1-phosphate from S-methyl-5'-thioadenosine (hydrolase route): step 1/2. Its activity is regulated as follows. Inhibited by CBL3 in a calcium-dependent manner. Inhibited by 5'-methylthiotubercidin (MTT) and by formycin A (FMA). Its function is as follows. Enzyme of the methionine cycle that catalyzes the irreversible cleavage of the glycosidic bond in 5'-methylthioadenosine (MTA) to adenine and 5'-methylthioribose. Contributes to the maintenance of AdoMet homeostasis and is required to sustain high rates of ethylene synthesis. Inactive towards S-adenosylhomocysteine (SAH/AdoHcy). The protein is 5'-methylthioadenosine nucleosidase (MTN1) of Arabidopsis thaliana (Mouse-ear cress).